Reading from the N-terminus, the 198-residue chain is Chorion protein S19 (198 aa).

The first 16 residues, 1 to 16 (MNKFATLAVFISVCLA), serve as a signal peptide directing secretion.

This sequence belongs to the chorion protein S19 family.

The protein localises to the secreted. Chorion membrane (egg shell) protein; plays a role in protecting the egg from the environment. The protein is Chorion protein S19 (Cp19) of Drosophila virilis (Fruit fly).